The sequence spans 175 residues: Cytidylate kinase (175 aa).

7–15 is an ATP binding site; it reads GQPGSGKTS.

This sequence belongs to the cytidylate kinase family. Type 2 subfamily.

The protein localises to the cytoplasm. The catalysed reaction is CMP + ATP = CDP + ADP. The enzyme catalyses dCMP + ATP = dCDP + ADP. This chain is Cytidylate kinase, found in Methanocella arvoryzae (strain DSM 22066 / NBRC 105507 / MRE50).